Consider the following 197-residue polypeptide: 7-methyl-GTP pyrophosphatase (197 aa).

The active-site Proton acceptor is Asp-72.

The protein belongs to the Maf family. YceF subfamily. A divalent metal cation serves as cofactor.

Its subcellular location is the cytoplasm. The catalysed reaction is N(7)-methyl-GTP + H2O = N(7)-methyl-GMP + diphosphate + H(+). Nucleoside triphosphate pyrophosphatase that hydrolyzes 7-methyl-GTP (m(7)GTP). May have a dual role in cell division arrest and in preventing the incorporation of modified nucleotides into cellular nucleic acids. The chain is 7-methyl-GTP pyrophosphatase from Bordetella avium (strain 197N).